We begin with the raw amino-acid sequence, 101 residues long: Thioredoxin 1 (101 aa).

One can recognise a Thioredoxin domain in the interval 2–101 (AQTLDDLIRT…MRQEVLKAIG (100 aa)). Residues Cys-25 and Cys-28 are joined by a disulfide bond.

Belongs to the thioredoxin family.

Functionally, participates in various redox reactions through the reversible oxidation of its active center dithiol to a disulfide and catalyzes dithiol-disulfide exchange reactions. This is Thioredoxin 1 (trx1) from Chlorobaculum tepidum (strain ATCC 49652 / DSM 12025 / NBRC 103806 / TLS) (Chlorobium tepidum).